The chain runs to 253 residues: Glucosamine-6-phosphate deaminase (253 aa).

Aspartate 65 serves as the catalytic Proton acceptor; for enolization step. Residue asparagine 133 is the For ring-opening step of the active site. The active-site Proton acceptor; for ring-opening step is histidine 135. The active-site For ring-opening step is the glutamate 140.

The protein belongs to the glucosamine/galactosamine-6-phosphate isomerase family. NagB subfamily.

It carries out the reaction alpha-D-glucosamine 6-phosphate + H2O = beta-D-fructose 6-phosphate + NH4(+). It functions in the pathway amino-sugar metabolism; N-acetylneuraminate degradation; D-fructose 6-phosphate from N-acetylneuraminate: step 5/5. In terms of biological role, catalyzes the reversible isomerization-deamination of glucosamine 6-phosphate (GlcN6P) to form fructose 6-phosphate (Fru6P) and ammonium ion. This chain is Glucosamine-6-phosphate deaminase, found in Corynebacterium glutamicum (strain R).